The sequence spans 345 residues: Phosphoribosylformylglycinamidine cyclo-ligase (345 aa).

It belongs to the AIR synthase family.

It is found in the cytoplasm. The catalysed reaction is 2-formamido-N(1)-(5-O-phospho-beta-D-ribosyl)acetamidine + ATP = 5-amino-1-(5-phospho-beta-D-ribosyl)imidazole + ADP + phosphate + H(+). The protein operates within purine metabolism; IMP biosynthesis via de novo pathway; 5-amino-1-(5-phospho-D-ribosyl)imidazole from N(2)-formyl-N(1)-(5-phospho-D-ribosyl)glycinamide: step 2/2. The polypeptide is Phosphoribosylformylglycinamidine cyclo-ligase (Enterobacter sp. (strain 638)).